A 224-amino-acid chain; its full sequence is Heme response regulator HssR (224 aa).

Residues 3 to 116 enclose the Response regulatory domain; the sequence is KCLIVDDDYK…ELLFRIQAVL (114 aa). D52 carries the post-translational modification 4-aspartylphosphate. The ompR/PhoB-type DNA-binding region spans 124-222; sequence QDIIKLGNVT…VRGQGYRVIT (99 aa).

In terms of processing, phosphorylated by HssS.

It is found in the cytoplasm. Functionally, member of the two-component regulatory system HssS/HssR involved in intracellular heme homeostasis and tempering of staphylococcal virulence. Phosphorylated HssR binds to a direct repeat sequence within hrtAB promoter and activates the expression of hrtAB, an efflux pump, in response to extracellular heme, hemin, hemoglobin or blood. In Staphylococcus haemolyticus (strain JCSC1435), this protein is Heme response regulator HssR (hssR).